The following is a 105-amino-acid chain: MLITTTPFIEGRPVQEYKGAIYAQSILGANVVLDLLAAIRDFIGGHSKSYERVLARAREDAMKNLIKEAEKLGANAILAVDLDYNTVGPQGSMMMVSVSGTAVVL.

The protein belongs to the UPF0145 family.

The protein is UPF0145 protein CCNA_02462 of Caulobacter vibrioides (strain NA1000 / CB15N) (Caulobacter crescentus).